Here is a 218-residue protein sequence, read N- to C-terminus: Cell division protein SepF (218 aa).

The tract at residues aspartate 20–proline 81 is disordered. Residues proline 36–proline 65 are compositionally biased toward basic and acidic residues.

This sequence belongs to the SepF family. In terms of assembly, homodimer. Interacts with FtsZ.

The protein localises to the cytoplasm. Cell division protein that is part of the divisome complex and is recruited early to the Z-ring. Probably stimulates Z-ring formation, perhaps through the cross-linking of FtsZ protofilaments. Its function overlaps with FtsA. The protein is Cell division protein SepF of Mycobacterium bovis (strain ATCC BAA-935 / AF2122/97).